We begin with the raw amino-acid sequence, 119 residues long: MVQENKNFATAKAKSIRVSPRKLNLVAAFIRNMKVSEALVQLTFSPKRISKVVKACLQSAVANAENNLGLDIDRLVITNATVGKALVMKRVMPRAKGRATRINKFFSNLYITVTEKEDN.

This sequence belongs to the universal ribosomal protein uL22 family. As to quaternary structure, part of the 50S ribosomal subunit.

In terms of biological role, this protein binds specifically to 23S rRNA; its binding is stimulated by other ribosomal proteins, e.g. L4, L17, and L20. It is important during the early stages of 50S assembly. It makes multiple contacts with different domains of the 23S rRNA in the assembled 50S subunit and ribosome. Functionally, the globular domain of the protein is located near the polypeptide exit tunnel on the outside of the subunit, while an extended beta-hairpin is found that lines the wall of the exit tunnel in the center of the 70S ribosome. This Rickettsia bellii (strain OSU 85-389) protein is Large ribosomal subunit protein uL22.